We begin with the raw amino-acid sequence, 160 residues long: Ureidoglycolate lyase (160 aa).

Belongs to the ureidoglycolate lyase family. Homodimer. The cofactor is Ni(2+).

The enzyme catalyses (S)-ureidoglycolate = urea + glyoxylate. Its pathway is nitrogen metabolism; (S)-allantoin degradation. Functionally, catalyzes the catabolism of the allantoin degradation intermediate (S)-ureidoglycolate, generating urea and glyoxylate. Involved in the utilization of allantoin as nitrogen source. The polypeptide is Ureidoglycolate lyase (Salmonella typhimurium (strain LT2 / SGSC1412 / ATCC 700720)).